We begin with the raw amino-acid sequence, 68 residues long: DNA-directed RNA polymerase subunit omega (68 aa).

It belongs to the RNA polymerase subunit omega family. In terms of assembly, the RNAP catalytic core consists of 2 alpha, 1 beta, 1 beta' and 1 omega subunit. When a sigma factor is associated with the core the holoenzyme is formed, which can initiate transcription.

It catalyses the reaction RNA(n) + a ribonucleoside 5'-triphosphate = RNA(n+1) + diphosphate. In terms of biological role, promotes RNA polymerase assembly. Latches the N- and C-terminal regions of the beta' subunit thereby facilitating its interaction with the beta and alpha subunits. This is DNA-directed RNA polymerase subunit omega from Nitrosospira multiformis (strain ATCC 25196 / NCIMB 11849 / C 71).